Reading from the N-terminus, the 535-residue chain is Glucan 1,6-alpha-glucosidase (535 aa).

The active-site Nucleophile is the aspartate 194. Catalysis depends on glutamate 236, which acts as the Proton donor.

It belongs to the glycosyl hydrolase 13 family.

The protein localises to the cytoplasm. It carries out the reaction Hydrolysis of (1-&gt;6)-alpha-D-glucosidic linkages in (1-&gt;6)-alpha-D-glucans and derived oligosaccharides.. The physiological substrates may be short isomaltosaccharides. This chain is Glucan 1,6-alpha-glucosidase (dexB), found in Streptococcus pneumoniae serotype 4 (strain ATCC BAA-334 / TIGR4).